Here is an 81-residue protein sequence, read N- to C-terminus: Escargot/snail protein homolog (81 aa).

C2H2-type zinc fingers lie at residues 1-5 (HQQFH), 17-39 (FSCK…IRTH), 43-65 (CKCH…IRTH), and 71-81 (FSCQHCNRAFA).

Belongs to the snail C2H2-type zinc-finger protein family.

It localises to the nucleus. This is Escargot/snail protein homolog from Apis mellifera (Honeybee).